The chain runs to 206 residues: Geminin (206 aa).

Polar residues predominate over residues 1-18 (MNLSMKQKQEGAQENVKN). The interval 1–42 (MNLSMKQKQEGAQENVKNSPVPRRTLKMIQPSADGSLVGREN) is disordered. The residue at position 27 (lysine 27) is an N6-acetyllysine. A phosphoserine mark is found at serine 36, serine 63, and serine 64. The necessary and sufficient for interaction with IDAS and CDT1 stretch occupies residues 79–158 (TQEAFDLISK…AEVIERLSNE (80 aa)). Residues 91–141 (PSSQYWKEVAEQRRKALYEALKENEKLHKEIEQKDSEIARLRKENKDLAEV) adopt a coiled-coil conformation. The tract at residues 157 to 206 (NEPLDNFESPDSQEFDSEEEAVEYSELEDSGAGTCAEETVSSSTDARPCT) is disordered. The segment covering 167–185 (DSQEFDSEEEAVEYSELED) has biased composition (acidic residues). A homeodomain binding region spans residues 167–187 (DSQEFDSEEEAVEYSELEDSG). At serine 181 the chain carries Phosphoserine; by CK2. The span at 195 to 206 (TVSSSTDARPCT) shows a compositional bias: polar residues.

Belongs to the geminin family. As to quaternary structure, homotetramer. Interacts with CDT1; this inhibits binding of the MCM complex to origins of replication. The complex with CDT1 exists in two forms, a 'permissive' heterotrimer and an 'inhibitory' heterohexamer. Interacts (via coiled-coil domain) with IDAS (via coiled-coil domain); this targets GMNN to the nucleus. The heterodimer formed by GMNN and MCIDAS has much lower affinity for CDT1 than the GMNN homodimer. Interacts with a subset of Hox proteins, affinity increasing from anterior to posterior types, the strongest interaction being with HOXB1, HOXC9 and HOXD10. Interacts with LRWD1 from G1/S to mitosis. Post-translationally, phosphorylated during mitosis. Phosphorylation at Ser-181 by CK2 results in enhanced binding to Hox proteins and more potent inhibitory effect on Hox transcriptional activity.

Its subcellular location is the cytoplasm. The protein localises to the nucleus. Its function is as follows. Inhibits DNA replication by preventing the incorporation of MCM complex into pre-replication complex (pre-RC). It is degraded during the mitotic phase of the cell cycle. Its destruction at the metaphase-anaphase transition permits replication in the succeeding cell cycle. Inhibits histone acetyltransferase activity of KAT7/HBO1 in a CDT1-dependent manner, inhibiting histone H4 acetylation and DNA replication licensing. Inhibits the transcriptional activity of a subset of Hox proteins, enrolling them in cell proliferative control. The polypeptide is Geminin (Gmnn) (Mus musculus (Mouse)).